The primary structure comprises 232 residues: Ribose-5-phosphate isomerase A (232 aa).

Substrate is bound by residues 34 to 37 (TGST), 89 to 92 (DGAD), and 102 to 105 (KGGG). The active-site Proton acceptor is the Glu111. Position 129 (Lys129) interacts with substrate.

Belongs to the ribose 5-phosphate isomerase family. In terms of assembly, homodimer.

It carries out the reaction aldehydo-D-ribose 5-phosphate = D-ribulose 5-phosphate. It participates in carbohydrate degradation; pentose phosphate pathway; D-ribose 5-phosphate from D-ribulose 5-phosphate (non-oxidative stage): step 1/1. In terms of biological role, catalyzes the reversible conversion of ribose-5-phosphate to ribulose 5-phosphate. This is Ribose-5-phosphate isomerase A from Protochlamydia amoebophila (strain UWE25).